Here is a 475-residue protein sequence, read N- to C-terminus: Ribulose bisphosphate carboxylase large chain (475 aa).

Residues 1–2 constitute a propeptide that is removed on maturation; sequence MS. Position 3 is an N-acetylproline (proline 3). At lysine 14 the chain carries N6,N6,N6-trimethyllysine. Positions 123 and 173 each coordinate substrate. Catalysis depends on lysine 175, which acts as the Proton acceptor. Substrate is bound at residue lysine 177. Mg(2+)-binding residues include lysine 201, aspartate 203, and glutamate 204. Position 201 is an N6-carboxylysine (lysine 201). Catalysis depends on histidine 294, which acts as the Proton acceptor. Positions 295, 327, and 379 each coordinate substrate.

This sequence belongs to the RuBisCO large chain family. Type I subfamily. As to quaternary structure, heterohexadecamer of 8 large chains and 8 small chains; disulfide-linked. The disulfide link is formed within the large subunit homodimers. Requires Mg(2+) as cofactor. The disulfide bond which can form in the large chain dimeric partners within the hexadecamer appears to be associated with oxidative stress and protein turnover.

It is found in the plastid. Its subcellular location is the chloroplast. The enzyme catalyses 2 (2R)-3-phosphoglycerate + 2 H(+) = D-ribulose 1,5-bisphosphate + CO2 + H2O. It catalyses the reaction D-ribulose 1,5-bisphosphate + O2 = 2-phosphoglycolate + (2R)-3-phosphoglycerate + 2 H(+). Functionally, ruBisCO catalyzes two reactions: the carboxylation of D-ribulose 1,5-bisphosphate, the primary event in carbon dioxide fixation, as well as the oxidative fragmentation of the pentose substrate in the photorespiration process. Both reactions occur simultaneously and in competition at the same active site. This Pinus thunbergii (Japanese black pine) protein is Ribulose bisphosphate carboxylase large chain.